Here is a 257-residue protein sequence, read N- to C-terminus: MLLAIEQGNTNTLFAVHDGERWIAQWRAATDSTRTADEYAVWLSQLLSMAGLALGAFDGCIISSVVPQSIFNLRNLSRRYLHVEPLVIGENAELGIPIRIDKPSEAGADRLVNAIGAHIAYPGPLIVIDSGTATTFDVIAADGGFEGGVIAPGINLSMEALHTAAAKLPRVAIQKPQKVVGTDTVGAMQAGVFWGYIALIEGLIARIKAERDEPLTVVATGGVASLFHGATAAIDKFDPDLTIRGMLEIWRRNQAKA.

6-13 (EQGNTNTL) serves as a coordination point for ATP. 107-110 (GADR) is a binding site for substrate. Aspartate 109 serves as the catalytic Proton acceptor. A K(+)-binding site is contributed by aspartate 129. Residue threonine 132 coordinates ATP. Substrate is bound at residue threonine 184.

The protein belongs to the type III pantothenate kinase family. Homodimer. It depends on NH4(+) as a cofactor. K(+) is required as a cofactor.

It is found in the cytoplasm. The enzyme catalyses (R)-pantothenate + ATP = (R)-4'-phosphopantothenate + ADP + H(+). It participates in cofactor biosynthesis; coenzyme A biosynthesis; CoA from (R)-pantothenate: step 1/5. Catalyzes the phosphorylation of pantothenate (Pan), the first step in CoA biosynthesis. This Phenylobacterium zucineum (strain HLK1) protein is Type III pantothenate kinase.